A 467-amino-acid chain; its full sequence is UDP-N-acetylmuramate--L-alanine ligase (467 aa).

Position 114-120 (114-120 (GTHGKTT)) interacts with ATP.

The protein belongs to the MurCDEF family.

It localises to the cytoplasm. The enzyme catalyses UDP-N-acetyl-alpha-D-muramate + L-alanine + ATP = UDP-N-acetyl-alpha-D-muramoyl-L-alanine + ADP + phosphate + H(+). It participates in cell wall biogenesis; peptidoglycan biosynthesis. Cell wall formation. The protein is UDP-N-acetylmuramate--L-alanine ligase of Bradyrhizobium sp. (strain ORS 278).